Here is a 330-residue protein sequence, read N- to C-terminus: 7,8-didemethyl-8-hydroxy-5-deazariboflavin synthase (330 aa).

The Radical SAM core domain occupies 5–245 (VTFSRNVFIP…SDVAVQVAPN (241 aa)). [4Fe-4S] cluster-binding residues include Cys-19, Cys-23, and Cys-26.

Belongs to the radical SAM superfamily. CofG family. As to quaternary structure, consists of two subunits, CofG and CofH. It depends on [4Fe-4S] cluster as a cofactor.

The enzyme catalyses 5-amino-5-(4-hydroxybenzyl)-6-(D-ribitylimino)-5,6-dihydrouracil + S-adenosyl-L-methionine = 7,8-didemethyl-8-hydroxy-5-deazariboflavin + 5'-deoxyadenosine + L-methionine + NH4(+) + H(+). It functions in the pathway cofactor biosynthesis; coenzyme F0 biosynthesis. Catalyzes the radical-mediated synthesis of 7,8-didemethyl-8-hydroxy-5-deazariboflavin from 5-amino-5-(4-hydroxybenzyl)-6-(D-ribitylimino)-5,6-dihydrouracil. This Methanococcoides burtonii (strain DSM 6242 / NBRC 107633 / OCM 468 / ACE-M) protein is 7,8-didemethyl-8-hydroxy-5-deazariboflavin synthase.